A 135-amino-acid polypeptide reads, in one-letter code: Large ribosomal subunit protein uL16c (135 aa).

It belongs to the universal ribosomal protein uL16 family. As to quaternary structure, part of the 50S ribosomal subunit.

It is found in the plastid. Its subcellular location is the chloroplast. The sequence is that of Large ribosomal subunit protein uL16c from Jasminum nudiflorum (Winter jasmine).